The primary structure comprises 194 residues: Naphthalene 1,2-dioxygenase system, small oxygenase component (194 aa).

It belongs to the bacterial ring-hydroxylating dioxygenase beta subunit family. The naphthalene dioxygenase (NDO) multicomponent enzyme system is composed of an electron transfer component and a dioxygenase component (iron sulfur protein (ISP)). The electron transfer component is composed of a ferredoxin reductase (NagAa) and a ferredoxin (NagAb), and the dioxygenase component is formed by a large alpha subunit (NagAc) and a small beta subunit (NagAd).

The protein operates within aromatic compound metabolism; naphthalene degradation. Its function is as follows. Component of the naphthalene dioxygenase (NDO) multicomponent enzyme system which catalyzes the incorporation of both atoms of molecular oxygen into naphthalene to form cis-(1R,2S)-dihydroxy-1,2-dihydronaphthalene. Also able to use styrene as substrate. The beta subunit seems to have a structural role in the holoenzyme. The chain is Naphthalene 1,2-dioxygenase system, small oxygenase component from Ralstonia sp.